We begin with the raw amino-acid sequence, 370 residues long: Cobalt-precorrin-5B C(1)-methyltransferase (370 aa).

The protein belongs to the CbiD family.

The enzyme catalyses Co-precorrin-5B + S-adenosyl-L-methionine = Co-precorrin-6A + S-adenosyl-L-homocysteine. Its pathway is cofactor biosynthesis; adenosylcobalamin biosynthesis; cob(II)yrinate a,c-diamide from sirohydrochlorin (anaerobic route): step 6/10. In terms of biological role, catalyzes the methylation of C-1 in cobalt-precorrin-5B to form cobalt-precorrin-6A. This chain is Cobalt-precorrin-5B C(1)-methyltransferase, found in Trichormus variabilis (strain ATCC 29413 / PCC 7937) (Anabaena variabilis).